The chain runs to 69 residues: DNA gyrase inhibitor YacG (69 aa).

4 residues coordinate Zn(2+): C7, C10, C26, and C30.

The protein belongs to the DNA gyrase inhibitor YacG family. Interacts with GyrB. Requires Zn(2+) as cofactor.

Its function is as follows. Inhibits all the catalytic activities of DNA gyrase by preventing its interaction with DNA. Acts by binding directly to the C-terminal domain of GyrB, which probably disrupts DNA binding by the gyrase. The chain is DNA gyrase inhibitor YacG from Shewanella sp. (strain ANA-3).